The chain runs to 405 residues: Histone deacetylase clr6 (405 aa).

The tract at residues 6–318 (KKVSYFYDED…WTYETGLLAG (313 aa)) is histone deacetylase. Residue His138 is part of the active site.

Belongs to the histone deacetylase family. HD type 1 subfamily. As to quaternary structure, heterotetramer of alp13, clr6, prw1 and pst2.

The protein resides in the nucleus. It carries out the reaction N(6)-acetyl-L-lysyl-[histone] + H2O = L-lysyl-[histone] + acetate. In terms of biological role, responsible for the deacetylation of lysine residues on the N-terminal part of the core histones (H2A, H2B, H3 and H4). Histone deacetylation gives a tag for epigenetic repression and plays an important role in transcriptional regulation, cell cycle progression and developmental events. Histone deacetylases act via the formation of large multiprotein complexes. Has a role in chromatin assembly and chromosome segregation. In Schizosaccharomyces pombe (strain 972 / ATCC 24843) (Fission yeast), this protein is Histone deacetylase clr6 (clr6).